Here is a 181-residue protein sequence, read N- to C-terminus: Probable pyruvoyl-dependent arginine decarboxylase (181 aa).

A Pyruvic acid (Ser) modification is found at Ser43.

It belongs to the PdaD family. Pyruvate serves as cofactor.

The catalysed reaction is L-arginine + H(+) = agmatine + CO2. The protein is Probable pyruvoyl-dependent arginine decarboxylase of Chlorobaculum tepidum (strain ATCC 49652 / DSM 12025 / NBRC 103806 / TLS) (Chlorobium tepidum).